The sequence spans 453 residues: Bis(5'-adenosyl)-triphosphatase ENPP4 (453 aa).

An N-terminal signal peptide occupies residues 1 to 15 (MKLLVILLFSGLITG). Residues 16 to 407 (FRSDSSSSLP…DQWCINLPEA (392 aa)) lie on the Extracellular side of the membrane. The Zn(2+) site is built by Asp34 and Thr70. Catalysis depends on Thr70, which acts as the AMP-threonine intermediate. Asn91 and Tyr154 together coordinate substrate. N-linked (GlcNAc...) asparagine glycans are attached at residues Asn155 and Asn166. Zn(2+) contacts are provided by Asp189, His193, Asp237, and His238. Position 189 (Asp189) interacts with substrate. Cys254 and Cys287 are disulfide-bonded. Asn276 carries N-linked (GlcNAc...) asparagine glycosylation. Residue His336 coordinates Zn(2+). Asn386 carries N-linked (GlcNAc...) asparagine glycosylation. Residues Cys394 and Cys401 are joined by a disulfide bond. A helical transmembrane segment spans residues 408 to 428 (IAIVIGSLLVLTMLTCLIIIM). Topologically, residues 429-453 (QNRLSVPRPFSRLQLQEDDDDPLIG) are cytoplasmic.

This sequence belongs to the nucleotide pyrophosphatase/phosphodiesterase family. It depends on Zn(2+) as a cofactor. Expressed on the surface of vascular endothelia.

The protein localises to the cell membrane. The catalysed reaction is P(1),P(3)-bis(5'-adenosyl) triphosphate + H2O = AMP + ADP + 2 H(+). Functionally, hydrolyzes extracellular Ap3A into AMP and ADP, and Ap4A into AMP and ATP. Ap3A and Ap4A are diadenosine polyphosphates thought to induce proliferation of vascular smooth muscle cells. Acts as a procoagulant, mediating platelet aggregation at the site of nascent thrombus via release of ADP from Ap3A and activation of ADP receptors. This is Bis(5'-adenosyl)-triphosphatase ENPP4 (ENPP4) from Homo sapiens (Human).